The primary structure comprises 246 residues: 3-deoxy-manno-octulosonate cytidylyltransferase (246 aa).

Belongs to the KdsB family.

The protein resides in the cytoplasm. It carries out the reaction 3-deoxy-alpha-D-manno-oct-2-ulosonate + CTP = CMP-3-deoxy-beta-D-manno-octulosonate + diphosphate. It participates in nucleotide-sugar biosynthesis; CMP-3-deoxy-D-manno-octulosonate biosynthesis; CMP-3-deoxy-D-manno-octulosonate from 3-deoxy-D-manno-octulosonate and CTP: step 1/1. Its pathway is bacterial outer membrane biogenesis; lipopolysaccharide biosynthesis. Functionally, activates KDO (a required 8-carbon sugar) for incorporation into bacterial lipopolysaccharide in Gram-negative bacteria. This chain is 3-deoxy-manno-octulosonate cytidylyltransferase, found in Paramagnetospirillum magneticum (strain ATCC 700264 / AMB-1) (Magnetospirillum magneticum).